Here is a 94-residue protein sequence, read N- to C-terminus: Neutrophil antibiotic peptide NP-2 (94 aa).

An N-terminal signal peptide occupies residues 1–19 (MRTLTLLTALLLLALHTQA). The propeptide occupies 20–62 (KSPQGTAEEAPDQEQLVMEDQDISISFGGDKGTALQDADVKAG). Cystine bridges form between C65-C93, C67-C82, and C72-C92.

Belongs to the alpha-defensin family. Highest expression in bone marrow and to a much lesser extent in small intestine.

Its subcellular location is the secreted. In terms of biological role, active in vitro against S.aureus, fungi, Gram-positive and Gram-negative bacteria and to a lesser extent against an enveloped virus. The chain is Neutrophil antibiotic peptide NP-2 (Defa) from Rattus norvegicus (Rat).